We begin with the raw amino-acid sequence, 604 residues long: Cytosolic Fe-S cluster assembly factor nar1 (604 aa).

Cys20, Cys62, Cys65, Cys68, Cys215, and Cys270 together coordinate [4Fe-4S] cluster. Residues Leu434 to Ser461 are disordered. Positions Met451–Ser461 are enriched in polar residues. Residues Cys473 and Cys477 each contribute to the [4Fe-4S] cluster site.

The protein belongs to the NARF family.

Component of the cytosolic Fe/S protein assembly machinery. Required for maturation of extramitochondrial Fe/S proteins. May play a role in the transfer of pre-assembled Fe/S clusters to target apoproteins. The chain is Cytosolic Fe-S cluster assembly factor nar1 (nar1) from Penicillium rubens (strain ATCC 28089 / DSM 1075 / NRRL 1951 / Wisconsin 54-1255) (Penicillium chrysogenum).